Reading from the N-terminus, the 212-residue chain is ATP-dependent Clp protease proteolytic subunit (212 aa).

The active-site Nucleophile is S114. H139 is an active-site residue.

The protein belongs to the peptidase S14 family. Fourteen ClpP subunits assemble into 2 heptameric rings which stack back to back to give a disk-like structure with a central cavity, resembling the structure of eukaryotic proteasomes.

It localises to the cytoplasm. The enzyme catalyses Hydrolysis of proteins to small peptides in the presence of ATP and magnesium. alpha-casein is the usual test substrate. In the absence of ATP, only oligopeptides shorter than five residues are hydrolyzed (such as succinyl-Leu-Tyr-|-NHMec, and Leu-Tyr-Leu-|-Tyr-Trp, in which cleavage of the -Tyr-|-Leu- and -Tyr-|-Trp bonds also occurs).. Its function is as follows. Cleaves peptides in various proteins in a process that requires ATP hydrolysis. Has a chymotrypsin-like activity. Plays a major role in the degradation of misfolded proteins. In Laribacter hongkongensis (strain HLHK9), this protein is ATP-dependent Clp protease proteolytic subunit.